A 966-amino-acid chain; its full sequence is MQGNLLKVLGVLAIVATLVCFIFAALGMIGAVKVGDSCYMRYASDGQGGADSIIGTITLNANANYVNTAKMLSDGTTLLVPDPTRYGEWLNTQVLVENSQPVNLQVVGQVSLCLAYIPKDNLQRTGAGSNLDDNGQMIPIPRINDANNPPVSLIMDAKNNEWRNIAELYANDRVLVSVSPNFANTDATVKDAFKGAEVTQDCSENKTTYNPICGKYSVYSGEYVNACELKEKYWNCEVTWRCPTWHEQIGCDWGALGCVASCKKIPECTTKCMAWVNITRPAPENYLDDGSFTFSWSDNTGKLFIDYSALQCSYNANIPPVDKCPDRVRDRRIKDKDYIGGVHCTSGICSDGDFQKNRRFWYTADGKGGKGPTGLIYQMNDAGSVSQALPSKLEFAKFVADTDQPPDYKGKDGKYLYKVIYNIPFNSNIAKSYLQYRLWSPTSQDSSKNTGGYVLNIKQTKCYRENGNSFNDTFDDRGRVQYIIVKPSENPNTSGKTYSPQGISVDSEGKYSFNANEAGYIWMKILNDPGNNLRDYKDSEGSYKVHFSTSLKVGSFTIKVMNPLLQLFKTKVQGAATSIFKNMVCYKANDSSSCTNFFTYIKAILILYVMTYGAMFLLGFAKINQKELVIRIAKIGVVSGLMNGNTFEFFNNYLFDAITNFSDSIIANMSGYSLFTSTNTISNPFMFLDAVMSKIFFSQTFIAQLLALLSLGLSGIIYFIITFIAVCIVIITALRAVAVYIMAFMATCILIGIAPLFISFLLFDFTRYLFDNWVRFTIRYMMEPVVMMAGIIVLTQLFTIYLDFVLGYSVCWKCALPIKIPFIGTILPIALLNVPIFCINWFAPWGMDYMSGMMGVNMQNIVALVIIAYGMYGYVEFSGRIVVKLTSAVGPSATEIGGKMSHDAGQKVLSSIGMDDKTRQGITGRAEARLKQRNKTLDQAEKNRKNTQKEGGEKTNEEPPKPETPK.

The N-terminal stretch at 1-24 (MQGNLLKVLGVLAIVATLVCFIFA) is a signal peptide. 6 consecutive transmembrane segments (helical) span residues 601–621 (IKAI…LGFA), 711–731 (LGLS…IVII), 743–763 (AFMA…FLLF), 785–805 (VVMM…LDFV), 822–842 (FIGT…INWF), and 855–875 (GVNM…YGYV). Residues 918–966 (TRQGITGRAEARLKQRNKTLDQAEKNRKNTQKEGGEKTNEEPPKPETPK) are disordered. The span at 926-966 (AEARLKQRNKTLDQAEKNRKNTQKEGGEKTNEEPPKPETPK) shows a compositional bias: basic and acidic residues.

The protein belongs to the TrbL/VirB6 family.

It is found in the cell membrane. This is an uncharacterized protein from Rickettsia conorii (strain ATCC VR-613 / Malish 7).